We begin with the raw amino-acid sequence, 646 residues long: Rho guanine nucleotide exchange factor 7 (646 aa).

One can recognise an SH3 domain in the interval 6–65; it reads NSQLVVRAKFNFQQTNEDELSFSKGDVIHVTRVEEGGWWEGTHNGRTGWFPSNYVREIKP. Ser-7, Ser-71, and Ser-79 each carry phosphoserine. One can recognise a DH domain in the interval 93 to 273; the sequence is YYNVVLQNIL…KNLSAQCQEV (181 aa). The PH domain maps to 295–400; it reads DIKTLGSVTY…WVEHLQRQTK (106 aa). Ser-340 is modified (phosphoserine). Disordered stretches follow at residues 402–464 and 500–520; these read TSVS…GPLE and KTMK…DEEF. Over residues 415–428 the composition is skewed to polar residues; the sequence is PSHTLPSHPLTPSS. Basic residues predominate over residues 500-512; that stretch reads KTMKKLLPKRKPE. Residues Ser-516 and Ser-560 each carry the phosphoserine modification.

Interacts with SCRIB; interaction is direct and may play a role in regulation of apoptosis. Interacts with PAK kinases through the SH3 domain. Interacts with GIT1 and probably TGFB1I1. Interacts with ITCH and PARVB. Interacts with FRMPD4 (via N-terminus). Interacts with CaMK1. Interacts with PTK2/FAK1 and RAC1. Interacts with BIN2. Interacts with YWHAZ. Interacts (via PH domain) with NOX1 (via FAD-binding FR-type domain). Phosphorylated on Ser-516 by CaMK1; enhancement of GEF activity and downstream activation of RAC1. Phosphorylated by PTK2/FAK1; this promotes interaction with RAC1.

It is found in the cell junction. It localises to the focal adhesion. The protein localises to the cell projection. Its subcellular location is the ruffle. The protein resides in the cytoplasm. It is found in the cell cortex. It localises to the lamellipodium. In terms of biological role, acts as a RAC1 guanine nucleotide exchange factor (GEF) and can induce membrane ruffling. Functions in cell migration, attachment and cell spreading. Promotes targeting of RAC1 to focal adhesions. May function as a positive regulator of apoptosis. Downstream of NMDA receptors and CaMKK-CaMK1 signaling cascade, promotes the formation of spines and synapses in hippocampal neurons. In Rattus norvegicus (Rat), this protein is Rho guanine nucleotide exchange factor 7 (Arhgef7).